A 252-amino-acid chain; its full sequence is 5'-nucleotidase SurE (252 aa).

A divalent metal cation is bound by residues D8, D9, S39, and N95.

The protein belongs to the SurE nucleotidase family. The cofactor is a divalent metal cation.

The protein resides in the cytoplasm. It catalyses the reaction a ribonucleoside 5'-phosphate + H2O = a ribonucleoside + phosphate. Its function is as follows. Nucleotidase that shows phosphatase activity on nucleoside 5'-monophosphates. In Clostridium botulinum (strain ATCC 19397 / Type A), this protein is 5'-nucleotidase SurE.